The primary structure comprises 461 residues: Phosphoglucosamine mutase (461 aa).

Ser107 serves as the catalytic Phosphoserine intermediate. Residues Ser107, Asp254, Asp256, and Asp258 each contribute to the Mg(2+) site. Residue Ser107 is modified to Phosphoserine.

The protein belongs to the phosphohexose mutase family. It depends on Mg(2+) as a cofactor. In terms of processing, activated by phosphorylation.

It catalyses the reaction alpha-D-glucosamine 1-phosphate = D-glucosamine 6-phosphate. Functionally, catalyzes the conversion of glucosamine-6-phosphate to glucosamine-1-phosphate. This is Phosphoglucosamine mutase from Bifidobacterium longum subsp. infantis (strain ATCC 15697 / DSM 20088 / JCM 1222 / NCTC 11817 / S12).